We begin with the raw amino-acid sequence, 182 residues long: Small ribosomal subunit protein uS9 (182 aa).

The protein belongs to the universal ribosomal protein uS9 family.

The chain is Small ribosomal subunit protein uS9 from Corynebacterium efficiens (strain DSM 44549 / YS-314 / AJ 12310 / JCM 11189 / NBRC 100395).